A 200-amino-acid polypeptide reads, in one-letter code: Large ribosomal subunit protein uL4 (200 aa).

Positions 38-65 (GRQGSKAQKTRSEVSGGGKKPWRQKGTG) are disordered.

This sequence belongs to the universal ribosomal protein uL4 family. As to quaternary structure, part of the 50S ribosomal subunit.

One of the primary rRNA binding proteins, this protein initially binds near the 5'-end of the 23S rRNA. It is important during the early stages of 50S assembly. It makes multiple contacts with different domains of the 23S rRNA in the assembled 50S subunit and ribosome. Functionally, forms part of the polypeptide exit tunnel. In Pseudomonas aeruginosa (strain LESB58), this protein is Large ribosomal subunit protein uL4.